Reading from the N-terminus, the 80-residue chain is Pigment-dispersing hormone peptides (80 aa).

A signal peptide spans 1–20 (MANYITIAIIVGIVCGQALS). A propeptide spanning residues 21–58 (VEDVDRNLLELNLPYGRGLDSELQLARLMLAAPRFCHP) is cleaved from the precursor. Ala-78 carries the alanine amide modification.

The protein belongs to the arthropod PDH family. In terms of tissue distribution, expressed in the brain (at protein level).

The protein resides in the secreted. In terms of biological role, neuropeptide PDF is the main transmitter regulating circadian locomotor rhythms. The polypeptide is Pigment-dispersing hormone peptides (Camponotus floridanus (Florida carpenter ant)).